The chain runs to 249 residues: Octanoyltransferase (249 aa).

Residues 1-23 (MVNSPQNPRQDQRQDLDLTSFSA) are disordered. Positions 57 to 241 (GEAPELVWLL…AFEELFGPTR (185 aa)) constitute a BPL/LPL catalytic domain. Residues 95-102 (RGGQLTYH), 170-172 (AIG), and 183-185 (GIA) each bind substrate. Cys201 acts as the Acyl-thioester intermediate in catalysis.

This sequence belongs to the LipB family.

Its subcellular location is the cytoplasm. The enzyme catalyses octanoyl-[ACP] + L-lysyl-[protein] = N(6)-octanoyl-L-lysyl-[protein] + holo-[ACP] + H(+). Its pathway is protein modification; protein lipoylation via endogenous pathway; protein N(6)-(lipoyl)lysine from octanoyl-[acyl-carrier-protein]: step 1/2. Catalyzes the transfer of endogenously produced octanoic acid from octanoyl-acyl-carrier-protein onto the lipoyl domains of lipoate-dependent enzymes. Lipoyl-ACP can also act as a substrate although octanoyl-ACP is likely to be the physiological substrate. The protein is Octanoyltransferase of Bradyrhizobium diazoefficiens (strain JCM 10833 / BCRC 13528 / IAM 13628 / NBRC 14792 / USDA 110).